The chain runs to 248 residues: NADP-dependent 3-hydroxy acid dehydrogenase YdfG (248 aa).

Residues 7-12 (GATAGF), 32-33 (RR), 54-55 (DV), and Asn-81 each bind NADP(+). Residue Ser-134 participates in substrate binding. Residues Tyr-147, Lys-151, and 177-185 (PGLVGGTEF) contribute to the NADP(+) site. The active-site Proton acceptor is the Tyr-147.

Belongs to the short-chain dehydrogenases/reductases (SDR) family. As to quaternary structure, homotetramer.

It catalyses the reaction 3-hydroxypropanoate + NADP(+) = 3-oxopropanoate + NADPH + H(+). It carries out the reaction L-allo-threonine + NADP(+) = aminoacetone + CO2 + NADPH. Functionally, NADP-dependent dehydrogenase with broad substrate specificity acting on 3-hydroxy acids. Catalyzes the NADP-dependent oxidation of L-allo-threonine to L-2-amino-3-keto-butyrate, which is spontaneously decarboxylated into aminoacetone. Also acts on D-threonine, L-serine, D-serine, D-3-hydroxyisobutyrate, L-3-hydroxyisobutyrate, D-glycerate and L-glycerate. Able to catalyze the reduction of the malonic semialdehyde to 3-hydroxypropionic acid. YdfG is apparently supplementing RutE, the presumed malonic semialdehyde reductase involved in pyrimidine degradation since both are able to detoxify malonic semialdehyde. The protein is NADP-dependent 3-hydroxy acid dehydrogenase YdfG of Salmonella typhi.